Reading from the N-terminus, the 506-residue chain is Maturase K (506 aa).

The protein belongs to the intron maturase 2 family. MatK subfamily.

It is found in the plastid. The protein resides in the chloroplast. Usually encoded in the trnK tRNA gene intron. Probably assists in splicing its own and other chloroplast group II introns. The protein is Maturase K of Jurinea cyanoides.